A 160-amino-acid chain; its full sequence is Peptide deformylase 1 (160 aa).

Cys-90 and His-132 together coordinate Fe cation. Glu-133 is a catalytic residue. His-136 provides a ligand contact to Fe cation.

It belongs to the polypeptide deformylase family. Fe(2+) is required as a cofactor.

It carries out the reaction N-terminal N-formyl-L-methionyl-[peptide] + H2O = N-terminal L-methionyl-[peptide] + formate. Removes the formyl group from the N-terminal Met of newly synthesized proteins. Requires at least a dipeptide for an efficient rate of reaction. N-terminal L-methionine is a prerequisite for activity but the enzyme has broad specificity at other positions. The polypeptide is Peptide deformylase 1 (defA) (Bacillus subtilis (strain 168)).